A 331-amino-acid chain; its full sequence is MSSSKDCKATSNVDQTIPASNVNSGDFISSNTSSSNSENSNIQGKHYTQVGEDADNSFISENTPKNTFESTQTYENLESISKNEPTSEASKPLLNELVPEEPLPREPPLPNEPVPEEPLPGEPPLPDEPVPEEPLPGEPPLPNEPVPETNCHKESPLSDETVSETSKNDTSNSPTNENQAQPSIAWSEGHRIAAIWDPSQQAYYFWDTLTNTTSWNNPLEDEEQTSPLDYTAKVQFNRLSGKFMPKWASPELRSEENKAHKHMEQYFDINSSLNSHNGQSLLAERRNKRYTRKEMEQMKRRTKEKKEMKRRALYDIASDEKDFRRRKIIRY.

A disordered region spans residues 1-184 (MSSSKDCKAT…TNENQAQPSI (184 aa)). Positions 9–22 (ATSNVDQTIPASNV) are enriched in polar residues. A compositionally biased stretch (low complexity) spans 23–41 (NSGDFISSNTSSSNSENSN). A compositionally biased stretch (polar residues) spans 57-89 (SFISENTPKNTFESTQTYENLESISKNEPTSEA). Pro residues predominate over residues 105–145 (REPPLPNEPVPEEPLPGEPPLPDEPVPEEPLPGEPPLPNEP). Polar residues predominate over residues 158–184 (SDETVSETSKNDTSNSPTNENQAQPSI). One can recognise a WW domain in the interval 187-220 (SEGHRIAAIWDPSQQAYYFWDTLTNTTSWNNPLE). Positions 290–309 (YTRKEMEQMKRRTKEKKEMK) are disordered. A compositionally biased stretch (basic and acidic residues) spans 292–309 (RKEMEQMKRRTKEKKEMK).

The protein localises to the nucleus. The sequence is that of WW domain-containing protein C2F3.14c from Schizosaccharomyces pombe (strain 972 / ATCC 24843) (Fission yeast).